A 354-amino-acid chain; its full sequence is Uroporphyrinogen decarboxylase (354 aa).

Residues 27-31 (RQAGR), Asp-77, Tyr-154, Thr-209, and His-327 contribute to the substrate site.

This sequence belongs to the uroporphyrinogen decarboxylase family. In terms of assembly, homodimer.

The protein localises to the cytoplasm. It catalyses the reaction uroporphyrinogen III + 4 H(+) = coproporphyrinogen III + 4 CO2. It participates in porphyrin-containing compound metabolism; protoporphyrin-IX biosynthesis; coproporphyrinogen-III from 5-aminolevulinate: step 4/4. Its function is as follows. Catalyzes the decarboxylation of four acetate groups of uroporphyrinogen-III to yield coproporphyrinogen-III. The sequence is that of Uroporphyrinogen decarboxylase from Escherichia coli (strain UTI89 / UPEC).